We begin with the raw amino-acid sequence, 78 residues long: Large ribosomal subunit protein bL28 (78 aa).

It belongs to the bacterial ribosomal protein bL28 family.

The protein is Large ribosomal subunit protein bL28 (rpmB) of Xylella fastidiosa (strain 9a5c).